Consider the following 454-residue polypeptide: Pup--protein ligase (454 aa).

Glutamate 9 is a Mg(2+) binding site. An ATP-binding site is contributed by arginine 53. Tyrosine 55 contacts Mg(2+). Residue aspartate 57 is the Proton acceptor of the active site. Glutamate 63 contacts Mg(2+). Residues threonine 66 and tryptophan 420 each coordinate ATP.

This sequence belongs to the Pup ligase/Pup deamidase family. Pup-conjugating enzyme subfamily.

The catalysed reaction is ATP + [prokaryotic ubiquitin-like protein]-L-glutamate + [protein]-L-lysine = ADP + phosphate + N(6)-([prokaryotic ubiquitin-like protein]-gamma-L-glutamyl)-[protein]-L-lysine.. It functions in the pathway protein degradation; proteasomal Pup-dependent pathway. It participates in protein modification; protein pupylation. Functionally, catalyzes the covalent attachment of the prokaryotic ubiquitin-like protein modifier Pup to the proteasomal substrate proteins, thereby targeting them for proteasomal degradation. This tagging system is termed pupylation. The ligation reaction involves the side-chain carboxylate of the C-terminal glutamate of Pup and the side-chain amino group of a substrate lysine. This chain is Pup--protein ligase, found in Pseudarthrobacter chlorophenolicus (strain ATCC 700700 / DSM 12829 / CIP 107037 / JCM 12360 / KCTC 9906 / NCIMB 13794 / A6) (Arthrobacter chlorophenolicus).